The sequence spans 177 residues: 2-C-methyl-D-erythritol 2,4-cyclodiphosphate synthase (177 aa).

A divalent metal cation is bound by residues Asp23 and His25. Residues 23-25 and 49-50 each bind 4-CDP-2-C-methyl-D-erythritol 2-phosphate; these read DVH and HS. His57 lines the a divalent metal cation pocket. Residues 71–73, 76–80, 115–121, and Arg157 each bind 4-CDP-2-C-methyl-D-erythritol 2-phosphate; these read DIG, FSDTD, and AQAPRMA.

Belongs to the IspF family. As to quaternary structure, homotrimer. A divalent metal cation is required as a cofactor.

It catalyses the reaction 4-CDP-2-C-methyl-D-erythritol 2-phosphate = 2-C-methyl-D-erythritol 2,4-cyclic diphosphate + CMP. The protein operates within isoprenoid biosynthesis; isopentenyl diphosphate biosynthesis via DXP pathway; isopentenyl diphosphate from 1-deoxy-D-xylulose 5-phosphate: step 4/6. Its function is as follows. Involved in the biosynthesis of isopentenyl diphosphate (IPP) and dimethylallyl diphosphate (DMAPP), two major building blocks of isoprenoid compounds. Catalyzes the conversion of 4-diphosphocytidyl-2-C-methyl-D-erythritol 2-phosphate (CDP-ME2P) to 2-C-methyl-D-erythritol 2,4-cyclodiphosphate (ME-CPP) with a corresponding release of cytidine 5-monophosphate (CMP). The chain is 2-C-methyl-D-erythritol 2,4-cyclodiphosphate synthase from Nitrosospira multiformis (strain ATCC 25196 / NCIMB 11849 / C 71).